Here is a 466-residue protein sequence, read N- to C-terminus: Ribulose bisphosphate carboxylase large chain (466 aa).

Lys-5 carries the N6,N6,N6-trimethyllysine modification. Substrate-binding residues include Asn-114 and Thr-164. The active-site Proton acceptor is Lys-166. Residue Lys-168 participates in substrate binding. 3 residues coordinate Mg(2+): Lys-192, Asp-194, and Glu-195. Lys-192 is modified (N6-carboxylysine). His-285 acts as the Proton acceptor in catalysis. Residues Arg-286, His-318, and Ser-370 each contribute to the substrate site.

It belongs to the RuBisCO large chain family. Type I subfamily. As to quaternary structure, heterohexadecamer of 8 large chains and 8 small chains; disulfide-linked. The disulfide link is formed within the large subunit homodimers. Mg(2+) is required as a cofactor. Post-translationally, the disulfide bond which can form in the large chain dimeric partners within the hexadecamer appears to be associated with oxidative stress and protein turnover.

It localises to the plastid. The protein resides in the chloroplast. The catalysed reaction is 2 (2R)-3-phosphoglycerate + 2 H(+) = D-ribulose 1,5-bisphosphate + CO2 + H2O. It catalyses the reaction D-ribulose 1,5-bisphosphate + O2 = 2-phosphoglycolate + (2R)-3-phosphoglycerate + 2 H(+). In terms of biological role, ruBisCO catalyzes two reactions: the carboxylation of D-ribulose 1,5-bisphosphate, the primary event in carbon dioxide fixation, as well as the oxidative fragmentation of the pentose substrate in the photorespiration process. Both reactions occur simultaneously and in competition at the same active site. This Oxalis dillenii (Gray-green wood sorrel) protein is Ribulose bisphosphate carboxylase large chain.